The sequence spans 365 residues: Ribosomal RNA large subunit methyltransferase F (365 aa).

Residues methionine 1 to proline 48 form a disordered region. A compositionally biased stretch (basic and acidic residues) spans alanine 33–proline 48.

It belongs to the methyltransferase superfamily. METTL16/RlmF family.

It localises to the cytoplasm. The catalysed reaction is adenosine(1618) in 23S rRNA + S-adenosyl-L-methionine = N(6)-methyladenosine(1618) in 23S rRNA + S-adenosyl-L-homocysteine + H(+). Its function is as follows. Specifically methylates the adenine in position 1618 of 23S rRNA. This chain is Ribosomal RNA large subunit methyltransferase F, found in Shewanella baltica (strain OS223).